A 285-amino-acid chain; its full sequence is Glutamate racemase (285 aa).

Substrate is bound by residues 28-29 and 60-61; these read DS and YG. The active-site Proton donor/acceptor is the Cys92. 93-94 lines the substrate pocket; the sequence is NT. Residues Arg104 and 113–119 contribute to the UDP-N-acetyl-alpha-D-muramoyl-L-alanine site; that span reads GVVPAIK. The active-site Proton donor/acceptor is the Cys204. Residue 205–206 coordinates substrate; the sequence is TH.

Belongs to the aspartate/glutamate racemases family. Monomer.

It catalyses the reaction L-glutamate = D-glutamate. Its pathway is cell wall biogenesis; peptidoglycan biosynthesis. Its activity is regulated as follows. The low basal catalytic activity in increased 1000-fold in the presence of UDP-MurNAc-L-Ala, the product of the preceding enzyme in the peptidoglycan biosynthesis. Provides the (R)-glutamate required for cell wall biosynthesis. The chain is Glutamate racemase from Escherichia coli (strain K12).